The following is a 159-amino-acid chain: Protein Smg homolog (159 aa).

Belongs to the Smg family.

The polypeptide is Protein Smg homolog (Vibrio vulnificus (strain CMCP6)).